Reading from the N-terminus, the 473-residue chain is T-box transcription factor TBX6L (473 aa).

A DNA-binding region (T-box) is located at residues 43–217 (LWDKFSSIGT…NNPFAKGFRD (175 aa)). The tract at residues 342–361 (RLNPQETHHNSRPKIQLQPP) is disordered.

As to expression, exclusively expressed by ventral mesendoderm.

The protein localises to the nucleus. Its function is as follows. Probable transcriptional regulator involved in developmental processes. This Danio rerio (Zebrafish) protein is T-box transcription factor TBX6L (tbx6l).